The chain runs to 81 residues: Cytotoxin 3a (81 aa).

The N-terminal stretch at 1 to 21 (MKTLLLTLVVVTIVCLDLGYT) is a signal peptide. Intrachain disulfides connect cysteine 24-cysteine 42, cysteine 35-cysteine 59, cysteine 63-cysteine 74, and cysteine 75-cysteine 80.

Belongs to the three-finger toxin family. Short-chain subfamily. Type IA cytotoxin sub-subfamily. As to quaternary structure, monomer in solution; Homodimer and oligomer in the presence of negatively charged lipids forming a pore with a size ranging between 20 and 30 Angstroms. Expressed by the venom gland.

It localises to the secreted. Its subcellular location is the target cell membrane. In terms of biological role, shows cytolytic activity on many different cells by forming pore in lipid membranes. In vivo, increases heart rate or kills the animal by cardiac arrest. In addition, it binds to heparin with high affinity, interacts with Kv channel-interacting protein 1 (KCNIP1) in a calcium-independent manner, and binds to integrin alpha-V/beta-3 (ITGAV/ITGB3) with moderate affinity. The sequence is that of Cytotoxin 3a from Naja atra (Chinese cobra).